The chain runs to 267 residues: Small ribosomal subunit protein uS2 (267 aa).

Residues arginine 233–glycine 250 show a composition bias toward basic and acidic residues. Residues arginine 233–alanine 267 are disordered. Residues glutamate 251–valine 261 show a composition bias toward low complexity.

This sequence belongs to the universal ribosomal protein uS2 family.

The protein is Small ribosomal subunit protein uS2 of Syntrophotalea carbinolica (strain DSM 2380 / NBRC 103641 / GraBd1) (Pelobacter carbinolicus).